The chain runs to 696 residues: Tegument protein UL47 (696 aa).

Composition is skewed to basic residues over residues methionine 1–threonine 15 and arginine 70–serine 81. Disordered stretches follow at residues methionine 1–glycine 39 and serine 54–proline 130. The interval glutamate 57–alanine 84 is RNA-binding. The Nuclear localization signal motif lies at arginine 70–alanine 84. Low complexity predominate over residues alanine 87–serine 103. Positions serine 650–glutamate 673 match the Nuclear export signal motif.

The protein belongs to the alphaherpesvirinae HHV-1 UL47 family. Interacts with US3 kinase. Interacts with UL31 and UL34; these interactions seem important for efficient virion nuclear egress. Interacts with UL41/VHS. Phosphorylated by US3. This phosphorylation is required for proper nuclear localization.

The protein localises to the virion tegument. Its subcellular location is the host nucleus. It localises to the host cytoplasm. Tegument protein that can bind to various RNA transcripts. Plays a role in the attenuation of selective viral and cellular mRNA degradation by modulating the activity of host shutoff RNase UL41/VHS. Also plays a role in the primary envelopment of virions in the perinuclear space, probably by interacting with two nuclear egress proteins UL31 and UL34. The sequence is that of Tegument protein UL47 from Human herpesvirus 2 (strain HG52) (HHV-2).